A 177-amino-acid polypeptide reads, in one-letter code: Large ribosomal subunit protein uL6 (177 aa).

This sequence belongs to the universal ribosomal protein uL6 family. As to quaternary structure, part of the 50S ribosomal subunit.

Functionally, this protein binds to the 23S rRNA, and is important in its secondary structure. It is located near the subunit interface in the base of the L7/L12 stalk, and near the tRNA binding site of the peptidyltransferase center. The protein is Large ribosomal subunit protein uL6 of Pasteurella multocida (strain Pm70).